The chain runs to 170 residues: MEGERPRSDTVTTTVSSHMETISLGGSIAYDRSFLRSPTGVLLLMEIMFGLLVWALIAGSEYFLFSAFGWVMFVAVFYWVLSVFFFLLHLTRANTRITKVPWSLVGLCFNGSAFVLYLIAAVVEASSVNKDVHQHHNYNSWTASSFFAFIVTVCYALSTYFSFQAWRTKS.

Residues 1 to 38 (MEGERPRSDTVTTTVSSHMETISLGGSIAYDRSFLRSP) lie on the Cytoplasmic side of the membrane. An MARVEL domain is found at 34 to 167 (FLRSPTGVLL…STYFSFQAWR (134 aa)). A helical membrane pass occupies residues 39–59 (TGVLLLMEIMFGLLVWALIAG). Residues 60–67 (SEYFLFSA) lie on the Extracellular side of the membrane. Residues 68–88 (FGWVMFVAVFYWVLSVFFFLL) traverse the membrane as a helical segment. Residues 89 to 102 (HLTRANTRITKVPW) are Cytoplasmic-facing. A helical membrane pass occupies residues 103–123 (SLVGLCFNGSAFVLYLIAAVV). The Extracellular segment spans residues 124–145 (EASSVNKDVHQHHNYNSWTASS). A helical transmembrane segment spans residues 146-166 (FFAFIVTVCYALSTYFSFQAW). Over 167 to 170 (RTKS) the chain is Cytoplasmic.

It localises to the membrane. The protein resides in the nucleus. The sequence is that of MARVEL domain-containing protein 1 (marveld1) from Xenopus laevis (African clawed frog).